Reading from the N-terminus, the 581-residue chain is Probable peptidoglycan D,D-transpeptidase PenA (581 aa).

Residues 28-48 traverse the membrane as a helical segment; it reads ISFVLMAIAVLFAGLIARGLY. Serine 310 serves as the catalytic Acyl-ester intermediate.

Belongs to the transpeptidase family. FtsI subfamily.

The protein resides in the cell inner membrane. It catalyses the reaction Preferential cleavage: (Ac)2-L-Lys-D-Ala-|-D-Ala. Also transpeptidation of peptidyl-alanyl moieties that are N-acyl substituents of D-alanine.. The protein operates within cell wall biogenesis; peptidoglycan biosynthesis. Functionally, catalyzes cross-linking of the peptidoglycan cell wall at the division septum. The sequence is that of Probable peptidoglycan D,D-transpeptidase PenA from Neisseria meningitidis serogroup A / serotype 4A (strain DSM 15465 / Z2491).